Consider the following 297-residue polypeptide: 4-hydroxy-tetrahydrodipicolinate synthase (297 aa).

Thr55 is a pyruvate binding site. Residue Tyr144 is the Proton donor/acceptor of the active site. Lys172 functions as the Schiff-base intermediate with substrate in the catalytic mechanism. Residue Ile213 participates in pyruvate binding.

This sequence belongs to the DapA family. Homotetramer; dimer of dimers.

The protein localises to the cytoplasm. It carries out the reaction L-aspartate 4-semialdehyde + pyruvate = (2S,4S)-4-hydroxy-2,3,4,5-tetrahydrodipicolinate + H2O + H(+). The protein operates within amino-acid biosynthesis; L-lysine biosynthesis via DAP pathway; (S)-tetrahydrodipicolinate from L-aspartate: step 3/4. Functionally, catalyzes the condensation of (S)-aspartate-beta-semialdehyde [(S)-ASA] and pyruvate to 4-hydroxy-tetrahydrodipicolinate (HTPA). This is 4-hydroxy-tetrahydrodipicolinate synthase from Lactococcus lactis subsp. cremoris (strain SK11).